The primary structure comprises 303 residues: GTPase Era (303 aa).

Residues 8 to 176 (YCGFIAIVGR…ASIVRKHMPE (169 aa)) form the Era-type G domain. Residues 16–23 (GRPNVGKS) are G1. Residue 16 to 23 (GRPNVGKS) participates in GTP binding. Residues 42–46 (QTTRH) form a G2 region. The interval 63 to 66 (DTPG) is G3. GTP contacts are provided by residues 63 to 67 (DTPGL) and 125 to 128 (NKVD). A G4 region spans residues 125-128 (NKVD). The segment at 155 to 157 (ISA) is G5. The KH type-2 domain maps to 207 to 284 (LGEELPYSVT…HLELWVKVKS (78 aa)).

This sequence belongs to the TRAFAC class TrmE-Era-EngA-EngB-Septin-like GTPase superfamily. Era GTPase family. Monomer.

The protein resides in the cytoplasm. It localises to the cell inner membrane. Its function is as follows. An essential GTPase that binds both GDP and GTP, with rapid nucleotide exchange. Plays a role in 16S rRNA processing and 30S ribosomal subunit biogenesis and possibly also in cell cycle regulation and energy metabolism. The polypeptide is GTPase Era (Yersinia pseudotuberculosis serotype O:1b (strain IP 31758)).